The following is a 274-amino-acid chain: Large ribosomal subunit protein uL2cz/uL2cy (274 aa).

Disordered stretches follow at residues 1 to 23 and 223 to 274; these read MAIH…SQVK and MNPV…RRSK. The span at 7-23 shows a compositional bias: polar residues; that stretch reads KTSTPSTRNGTVGSQVK.

This sequence belongs to the universal ribosomal protein uL2 family. In terms of assembly, part of the 50S ribosomal subunit.

It is found in the plastid. It localises to the chloroplast. In Nandina domestica (Heavenly bamboo), this protein is Large ribosomal subunit protein uL2cz/uL2cy (rpl2-A).